Consider the following 495-residue polypeptide: Loline biosynthesis cluster 1 transcription factor lolU1 (495 aa).

It is found in the nucleus. In terms of biological role, transcriptional regulator that may regulate the expression of the loline biosynthesis cluster 1, one of the 2 clusters involved in the biosynthesis of loline alkaloids, potent insecticidal agents composed of a pyrrolizidine ring system and an uncommon ether bridge linking carbons 2 and 7. The protein is Loline biosynthesis cluster 1 transcription factor lolU1 of Epichloe uncinata (Endophyte fungus).